We begin with the raw amino-acid sequence, 618 residues long: GMC oxidoreductase family protein Mala s 12 (618 aa).

A signal peptide spans 1 to 23; it reads MKGIVSWAVVSAALVLSATESLA. Residues Val-129 and Val-280 each coordinate FAD. Residue His-556 is the Proton donor of the active site. Residue His-599 is the Proton acceptor of the active site.

Belongs to the GMC oxidoreductase family. As to quaternary structure, monomer. The cofactor is FAD.

The protein localises to the secreted. The sequence is that of GMC oxidoreductase family protein Mala s 12 from Malassezia sympodialis (strain ATCC 42132) (Atopic eczema-associated yeast).